A 405-amino-acid chain; its full sequence is NAC transcription factor NAM-A1 (405 aa).

Over residues 1-10 the composition is skewed to low complexity; sequence MGSSDSSSGS. Positions 1–38 are disordered; it reads MGSSDSSSGSAQKAARHQHEPPPPRQRGSAPELPPGFR. The region spanning 33-204 is the NAC domain; sequence LPPGFRFHPT…DWVLCRIYKK (172 aa). A DNA-binding region spans residues 137 to 210; sequence LGVKKALVFY…IYKKINKAAA (74 aa).

As to expression, expressed in flag leaves, green spikes and peduncles.

The protein localises to the nucleus. Transcription factor of the NAC family associated with the grain protein content (GPC). Accelerates senescence and increases nutrient remobilization from leaves to developing grains. The tetraploid cultivated wheat (T.durum) contains one additional gene coding for a functional protein (NAM-B2) and one extra pseudogene (NAM-B1). This is NAC transcription factor NAM-A1 (NAM-A1) from Triticum turgidum subsp. durum (Durum wheat).